The sequence spans 965 residues: Phosphoenolpyruvate carboxylase (965 aa).

Ser-11 is subject to Phosphoserine. Catalysis depends on residues His-173 and Lys-601.

This sequence belongs to the PEPCase type 1 family. As to quaternary structure, homotetramer. Requires Mg(2+) as cofactor.

The protein resides in the cytoplasm. The catalysed reaction is oxaloacetate + phosphate = phosphoenolpyruvate + hydrogencarbonate. It functions in the pathway photosynthesis; C3 acid pathway. With respect to regulation, by light-reversible phosphorylation. Through the carboxylation of phosphoenolpyruvate (PEP) it forms oxaloacetate, a four-carbon dicarboxylic acid source for the tricarboxylic acid cycle. This is Phosphoenolpyruvate carboxylase (PPC1) from Solanum tuberosum (Potato).